Consider the following 233-residue polypeptide: Large ribosomal subunit protein uL1 (233 aa).

This sequence belongs to the universal ribosomal protein uL1 family. Part of the 50S ribosomal subunit.

In terms of biological role, binds directly to 23S rRNA. The L1 stalk is quite mobile in the ribosome, and is involved in E site tRNA release. Functionally, protein L1 is also a translational repressor protein, it controls the translation of the L11 operon by binding to its mRNA. The sequence is that of Large ribosomal subunit protein uL1 from Vibrio vulnificus (strain CMCP6).